Here is a 257-residue protein sequence, read N- to C-terminus: 4-diphosphocytidyl-2-C-methyl-D-erythritol kinase (257 aa).

K8 is an active-site residue. ATP is bound at residue 91–101 (PMGGGLGGGSA). The active site involves D131.

It belongs to the GHMP kinase family. IspE subfamily.

The catalysed reaction is 4-CDP-2-C-methyl-D-erythritol + ATP = 4-CDP-2-C-methyl-D-erythritol 2-phosphate + ADP + H(+). The protein operates within isoprenoid biosynthesis; isopentenyl diphosphate biosynthesis via DXP pathway; isopentenyl diphosphate from 1-deoxy-D-xylulose 5-phosphate: step 3/6. Its function is as follows. Catalyzes the phosphorylation of the position 2 hydroxy group of 4-diphosphocytidyl-2C-methyl-D-erythritol. In Petrotoga mobilis (strain DSM 10674 / SJ95), this protein is 4-diphosphocytidyl-2-C-methyl-D-erythritol kinase.